An 883-amino-acid polypeptide reads, in one-letter code: Translation initiation factor IF-2 (883 aa).

Residues 118 to 261 (VARESEAAPA…KKKEAFKKTE (144 aa)) are disordered. Positions 124-150 (AAPAEEPVAAAVKPASEPPVVQKAPVA) are enriched in low complexity. Basic and acidic residues-rich tracts occupy residues 183–200 (PADRREATAPKKRIEERI) and 252–261 (KKKEAFKKTE). The 170-residue stretch at 383 to 552 (KRPPVVTIMG…LLQADVMDLK (170 aa)) folds into the tr-type G domain. The tract at residues 392–399 (GHVDHGKT) is G1. 392 to 399 (GHVDHGKT) provides a ligand contact to GTP. Positions 417–421 (GITQH) are G2. A G3 region spans residues 438–441 (DTPG). Residues 438 to 442 (DTPGH) and 492 to 495 (NKID) each bind GTP. A G4 region spans residues 492-495 (NKID). A G5 region spans residues 528 to 530 (SAK).

Belongs to the TRAFAC class translation factor GTPase superfamily. Classic translation factor GTPase family. IF-2 subfamily.

The protein localises to the cytoplasm. Its function is as follows. One of the essential components for the initiation of protein synthesis. Protects formylmethionyl-tRNA from spontaneous hydrolysis and promotes its binding to the 30S ribosomal subunits. Also involved in the hydrolysis of GTP during the formation of the 70S ribosomal complex. The polypeptide is Translation initiation factor IF-2 (Geobacter sulfurreducens (strain ATCC 51573 / DSM 12127 / PCA)).